A 469-amino-acid chain; its full sequence is 3-isopropylmalate dehydratase large subunit (469 aa).

Residues Cys-347, Cys-408, and Cys-411 each contribute to the [4Fe-4S] cluster site.

This sequence belongs to the aconitase/IPM isomerase family. LeuC type 1 subfamily. Heterodimer of LeuC and LeuD. Requires [4Fe-4S] cluster as cofactor.

The catalysed reaction is (2R,3S)-3-isopropylmalate = (2S)-2-isopropylmalate. The protein operates within amino-acid biosynthesis; L-leucine biosynthesis; L-leucine from 3-methyl-2-oxobutanoate: step 2/4. Catalyzes the isomerization between 2-isopropylmalate and 3-isopropylmalate, via the formation of 2-isopropylmaleate. The chain is 3-isopropylmalate dehydratase large subunit from Actinobacillus pleuropneumoniae serotype 5b (strain L20).